A 198-amino-acid chain; its full sequence is MNGAELIIQEINKEAERKIEYILNEARQQAEKIKEEARRNAEAKAEWIIRRAKTQAELEKQRIIANARLEVRRKRLAIQEEIISSVLEEVKRRLETMSEDEYFESVKALLKEAIKELNEKKVRVMSNEKTLGLIASRIEEIKSELGDVSIELGETVDTMGGVIVETEDGRIRIDNTFEARMERFEGEIRSTIAKVLFG.

It belongs to the V-ATPase E subunit family. In terms of assembly, has multiple subunits with at least A(3), B(3), C, D, E, F, H, I and proteolipid K(x).

Its subcellular location is the cell membrane. In terms of biological role, component of the A-type ATP synthase that produces ATP from ADP in the presence of a proton gradient across the membrane. This chain is A-type ATP synthase subunit E, found in Pyrococcus horikoshii (strain ATCC 700860 / DSM 12428 / JCM 9974 / NBRC 100139 / OT-3).